Consider the following 857-residue polypeptide: Leucine--tRNA ligase (857 aa).

The 'HIGH' region signature appears at 42-52 (PYPSGTLHMGH). The 'KMSKS' region motif lies at 616–620 (KMSKS). Residue Lys-619 participates in ATP binding.

Belongs to the class-I aminoacyl-tRNA synthetase family.

It localises to the cytoplasm. It catalyses the reaction tRNA(Leu) + L-leucine + ATP = L-leucyl-tRNA(Leu) + AMP + diphosphate. The protein is Leucine--tRNA ligase of Parasynechococcus marenigrum (strain WH8102).